Reading from the N-terminus, the 501-residue chain is Aspartate--tRNA ligase, cytoplasmic (501 aa).

Threonine 52 carries the post-translational modification Phosphothreonine. An N6-acetyllysine modification is found at lysine 74. Glutamate 229 contributes to the L-aspartate binding site. Serine 249 is subject to Phosphoserine. The tract at residues 251–254 (QLYK) is aspartate. Position 273 (arginine 273) interacts with L-aspartate. Residues 273 to 275 (RAE) and 281 to 283 (RHL) contribute to the ATP site. Lysine 374 is subject to N6-acetyllysine. Residues 411–415 (KQSNS) are binding site for the 3'-end of tRNA. Residue glutamate 424 coordinates ATP. L-aspartate-binding residues include serine 427 and arginine 431. ATP is bound at residue 472–475 (GLER). Threonine 500 carries the phosphothreonine; by PKA modification.

The protein belongs to the class-II aminoacyl-tRNA synthetase family. Type 2 subfamily. In terms of assembly, homodimer. Part of a multisubunit complex that groups tRNA ligases for Arg (RARS1), Asp (DARS1), Gln (QARS1), Ile (IARS1), Leu (LARS1), Lys (KARS1), Met (MARS1) the bifunctional ligase for Glu and Pro (EPRS1) and the auxiliary subunits AIMP1/p43, AIMP2/p38 and EEF1E1/p18.

It localises to the cytoplasm. It catalyses the reaction tRNA(Asp) + L-aspartate + ATP = L-aspartyl-tRNA(Asp) + AMP + diphosphate. In terms of biological role, catalyzes the specific attachment of an amino acid to its cognate tRNA in a 2 step reaction: the amino acid (AA) is first activated by ATP to form AA-AMP and then transferred to the acceptor end of the tRNA. The protein is Aspartate--tRNA ligase, cytoplasmic (DARS1) of Bos taurus (Bovine).